A 155-amino-acid polypeptide reads, in one-letter code: Ribosomal RNA large subunit methyltransferase H (155 aa).

S-adenosyl-L-methionine contacts are provided by residues Leu-73, Gly-104, and 123–128 (LSALTL).

Belongs to the RNA methyltransferase RlmH family. In terms of assembly, homodimer.

The protein resides in the cytoplasm. The catalysed reaction is pseudouridine(1915) in 23S rRNA + S-adenosyl-L-methionine = N(3)-methylpseudouridine(1915) in 23S rRNA + S-adenosyl-L-homocysteine + H(+). Specifically methylates the pseudouridine at position 1915 (m3Psi1915) in 23S rRNA. The sequence is that of Ribosomal RNA large subunit methyltransferase H from Coxiella burnetii (strain Dugway 5J108-111).